The following is a 781-amino-acid chain: Poly(ADP-ribose) glycohydrolase 1 (781 aa).

3 disordered regions span residues 28 to 87 (AHQV…VSEN), 102 to 131 (SLDN…NNKS), and 206 to 232 (ADST…DADS). The span at 106–121 (VTERSEHTLDNHKSTE) shows a compositional bias: basic and acidic residues.

This sequence belongs to the poly(ADP-ribose) glycohydrolase family. As to expression, expressed in head and tail neurons. Also detected in the central nerve cord and motor neurons.

The protein resides in the nucleus. The enzyme catalyses [(1''-&gt;2')-ADP-alpha-D-ribose](n) + H2O = [(1''-&gt;2')-ADP-alpha-D-ribose](n-1) + ADP-D-ribose. Functionally, poly(ADP-ribose) synthesized after DNA damage is only present transiently and is rapidly degraded by poly(ADP-ribose) glycohydrolase. Poly(ADP-ribose) metabolism may be required for maintenance of the normal function of neuronal cells. This chain is Poly(ADP-ribose) glycohydrolase 1, found in Caenorhabditis elegans.